Here is a 181-residue protein sequence, read N- to C-terminus: Inner membrane-spanning protein YciB (181 aa).

Helical transmembrane passes span 10–30, 50–70, 72–92, 118–138, and 148–168; these read LIIF…GALI, MHLI…VFHD, AFIK…LGVS, VTWY…YVAF, and FKVF…VFYL.

This sequence belongs to the YciB family.

The protein resides in the cell inner membrane. Functionally, plays a role in cell envelope biogenesis, maintenance of cell envelope integrity and membrane homeostasis. The chain is Inner membrane-spanning protein YciB from Shewanella sp. (strain MR-4).